The following is a 569-amino-acid chain: Vacuolar protein sorting-associated protein 53 B (569 aa).

Coiled-coil stretches lie at residues 53–90 (TRAKENLNDAICAAEELSHKIQEIKSKAEQTEAMVQDI), 125–145 (QVMTSKRQYKEAATQLEAINE), and 295–316 (KEKSDVEKLLLELKRTLEFERE).

The protein belongs to the VPS53 family. In terms of assembly, component of the Golgi-associated retrograde protein (GARP) complex.

Its subcellular location is the cytoplasm. It is found in the golgi apparatus. The protein resides in the trans-Golgi network membrane. It localises to the endosome membrane. Its function is as follows. Involved in retrograde transport from early and late endosomes to late Golgi, leading to the membrane fusion between late Golgi and endosomal vesicles. This chain is Vacuolar protein sorting-associated protein 53 B, found in Arabidopsis thaliana (Mouse-ear cress).